Reading from the N-terminus, the 43-residue chain is ALSCGTVNSNLAACIGYLTQNAPLARGCCTGVTNLNNMAXTTP.

The protein belongs to the plant LTP family. Homodimer.

Plant non-specific lipid-transfer proteins transfer phospholipids as well as galactolipids across membranes. May play a role in wax or cutin deposition in the cell walls of expanding epidermal cells and certain secretory tissues. This isoform inhibits the hyphal growth of several fungi in vitro. This Raphanus sativus (Radish) protein is Seed non-specific lipid transfer protein-like.